The sequence spans 707 residues: MAGSRLPRQLFLQGVAAVFMFAFASLYTQIPGLYGPEGILPARRTLRPQGKGRWQQLWETPTLLWEAPRLGLDTAQGLELLSLLGALVALGALLLSPLRHPVIYLLLWAAYLSACQVGQVFLYFQWDSLLLETGFLAVLVAPLRPASHRKEAPQGRQAGALPHEDLPFWLVRWLLFRLMFASGVVKLTSRCPAWWGLTALTYHYETQCLPTPAAWFAHHLPVWLHKLSVVATFLIEIAVPPLFFAPIRRLRLAAFYSQVLLQVLIIITGNYNFFNLMTLVLTTALLDDQHLAAEPGHGSRKKTATSWPKALLATLSLLLELAVYGLLAYGTVHYFGLEVDWQQRTIHSRTTFTFHQFSQWLKTLTLPTVWLGVASLVWELLSALWRWTQVRGWLRKLSAVVQLSLVGTATVALFLISLVPYSYVEPGTHGRLWTGAHRLFGAVEHLQLANSYGLFRRMTGLGGRPEVVLEGSYDGHHWTEIEFMYKPGNLSRPPPVVVPHQPRLDWQMWFAALGPHTHSPWFTSLVLRLLQGKEPVIRLVQSQVARYPFHKQPPTYVRAQRYKYWFSQPGEQGQWWRRQWVEEFFPSVSLGDPTLETLLRQFGLQEKSPPRTRSANSTLAQALHWTRSQLSPLEAPALLWGLLMAVGAVRFVQALLAPCSLRSSPLAPVSGEKRRPASQKDSGAASEQATAAPNPCSSSSRTTRRKK.

Transmembrane regions (helical) follow at residues 10–30 (LFLQGVAAVFMFAFASLYTQI), 78–98 (LELLSLLGALVALGALLLSPL), 102–122 (VIYLLLWAAYLSACQVGQVFL), 123–143 (YFQWDSLLLETGFLAVLVAPL), 165–185 (DLPFWLVRWLLFRLMFASGVV), 227–247 (LSVVATFLIEIAVPPLFFAPI), 259–279 (VLLQVLIIITGNYNFFNLMTL), 310–330 (ALLATLSLLLELAVYGLLAYG), 364–384 (LTLPTVWLGVASLVWELLSAL), and 399–419 (AVVQLSLVGTATVALFLISLV). 2 N-linked (GlcNAc...) asparagine glycosylation sites follow: Asn489 and Asn616. A helical transmembrane segment spans residues 637-657 (ALLWGLLMAVGAVRFVQALLA). A disordered region spans residues 665–707 (PLAPVSGEKRRPASQKDSGAASEQATAAPNPCSSSSRTTRRKK). The span at 679–691 (QKDSGAASEQATA) shows a compositional bias: polar residues.

It belongs to the lipase maturation factor family.

Its subcellular location is the endoplasmic reticulum membrane. Functionally, involved in the maturation of specific proteins in the endoplasmic reticulum. May be required for maturation and transport of active lipoprotein lipase (LPL) through the secretory pathway. This is Lipase maturation factor 2 (LMF2) from Homo sapiens (Human).